The primary structure comprises 278 residues: Gamma carbonic anhydrase 2, mitochondrial (278 aa).

A mitochondrion-targeting transit peptide spans 1–43 (MGTLGRAIYTVGNWIRGTGQALDRVGSLLQGSHRIEEHLSRHR). Substrate-binding positions include 86–88 (RGD) and 101–102 (QD). Positions 107, 130, and 135 each coordinate Zn(2+). Asn209 contributes to the substrate binding site.

Belongs to the gamma-class carbonic anhydrase family. In terms of assembly, homotrimer. Component of the mitochondrial oxidoreductase respiratory chain complex I; element of the extra matrix-exposed domain, which is attached to the membrane arm of this complex. Interacts with GAMMACAL1 and GAMMACAL2. It depends on Zn(2+) as a cofactor. Constitutively expressed in roots and leaves, with higher levels in flowers, particularly in tapetal tissue of anthers, inflorescence (IM) and floral meristems (FM).

It localises to the mitochondrion membrane. In terms of biological role, enzyme involved in the catabolism of H(2)CO(3) but that does not mediates the reversible hydration of carbon dioxide. Mediates complex I assembly in mitochondria and respiration. Binds HCO(3)-. Required for male fertility during anther development and dehiscence to regulate the secondary thickenings of the endothecial cell wall, probably by modulating H(2)O(2)-dependent lignin polymerization. The chain is Gamma carbonic anhydrase 2, mitochondrial (GAMMACA2) from Arabidopsis thaliana (Mouse-ear cress).